A 275-amino-acid polypeptide reads, in one-letter code: 2,3,4,5-tetrahydropyridine-2,6-dicarboxylate N-succinyltransferase (275 aa).

Arginine 104 and aspartate 141 together coordinate substrate.

It belongs to the transferase hexapeptide repeat family. As to quaternary structure, homotrimer.

The protein localises to the cytoplasm. It catalyses the reaction (S)-2,3,4,5-tetrahydrodipicolinate + succinyl-CoA + H2O = (S)-2-succinylamino-6-oxoheptanedioate + CoA. It functions in the pathway amino-acid biosynthesis; L-lysine biosynthesis via DAP pathway; LL-2,6-diaminopimelate from (S)-tetrahydrodipicolinate (succinylase route): step 1/3. The chain is 2,3,4,5-tetrahydropyridine-2,6-dicarboxylate N-succinyltransferase from Aeromonas salmonicida (strain A449).